Consider the following 587-residue polypeptide: Branchpoint-bridging protein (587 aa).

Positions 1-16 (MLNSRSVGSTGSNNTP) are enriched in polar residues. 2 disordered regions span residues 1–64 (MLNS…DGRG) and 121–142 (GDVV…DNHG). The span at 44–64 (DSYKSNSRMDHRPDGYHDGRG) shows a compositional bias: basic and acidic residues. Phosphoserine is present on residues serine 131 and serine 133. A KH domain is found at 191–271 (YVPVKDYPEI…DKINHAIKLI (81 aa)). 2 consecutive CCHC-type zinc fingers follow at residues 309–326 (QVCQ…DCPE) and 334–351 (IVCR…DCPV). 2 disordered regions span residues 375–490 (GGGS…PGTS) and 551–587 (IPGA…YSNR). Over residues 379-399 (AISNGNGEPQKSIEFSESGAA) the composition is skewed to polar residues. Positions 410–454 (AAASTSVSSSTSSPAPWAKPASSAAPSNPAPWQQPAAPQSAPALS) are enriched in low complexity. Polar residues-rich tracts occupy residues 465 to 483 (QPTQ…SQNA) and 563 to 573 (SYNTSESSNLN).

This sequence belongs to the BBP/SF1 family. U2AF large subunit (u2af59), U2AF small subunit (u2af23) and bpb1 interact to form a complex required for complex A formation.

It localises to the cytoplasm. Its subcellular location is the nucleus. In terms of biological role, necessary for the splicing of pre-mRNA. The BPB1(SF1)-u2af59-u2af23 complex has a role in the recognition of the branch site (5'-UACUAAC-3'), the pyrimidine tract and the 3'-splice site at the 3'-end of introns. The chain is Branchpoint-bridging protein (bpb1) from Schizosaccharomyces pombe (strain 972 / ATCC 24843) (Fission yeast).